We begin with the raw amino-acid sequence, 400 residues long: Homoserine O-acetyltransferase (400 aa).

Positions 1–11 (MVKVQSIQSQA) are enriched in polar residues. A disordered region spans residues 1 to 24 (MVKVQSIQSQAVHAEERAHEADHP). Over residues 13–23 (HAEERAHEADH) the composition is skewed to basic and acidic residues. Positions 64–373 (NAILVCHALT…TDRGHDAFLL (310 aa)) constitute an AB hydrolase-1 domain. Serine 169 functions as the Nucleophile in the catalytic mechanism. Arginine 239 provides a ligand contact to substrate. Catalysis depends on residues aspartate 335 and histidine 368. Position 369 (aspartate 369) interacts with substrate.

It belongs to the AB hydrolase superfamily. MetX family. As to quaternary structure, homodimer.

Its subcellular location is the cytoplasm. It catalyses the reaction L-homoserine + acetyl-CoA = O-acetyl-L-homoserine + CoA. Its pathway is amino-acid biosynthesis; L-methionine biosynthesis via de novo pathway; O-acetyl-L-homoserine from L-homoserine: step 1/1. In terms of biological role, transfers an acetyl group from acetyl-CoA to L-homoserine, forming acetyl-L-homoserine. The chain is Homoserine O-acetyltransferase from Rhodopseudomonas palustris (strain BisB18).